The sequence spans 148 residues: Receptor activity-modifying protein 3 (148 aa).

The first 23 residues, 1–23 (METGALRRPQLLPLLLLLCGGCP), serve as a signal peptide directing secretion. Topologically, residues 24–113 (RAGGCNETGM…CTVDRVHLED (90 aa)) are extracellular. Asparagine 29, asparagine 58, asparagine 71, and asparagine 103 each carry an N-linked (GlcNAc...) asparagine glycan. Cystine bridges form between cysteine 40–cysteine 72 and cysteine 57–cysteine 104. A helical membrane pass occupies residues 114 to 138 (PPDEVLIPLIVIPVVLTVAMAGLVV). Residues 139–148 (WRSKRTDTLL) are Cytoplasmic-facing.

The protein belongs to the RAMP family. Heterodimer of CALCRL and RAMP3; interaction induces allosteric modulation of CALCRL function and ligand specificity for adrenomedullin/ADM and intermedin/ADM2. Heterodimer of CALCR and RAMP3; interaction form the receptor complex AMYR3 for amylin/IAPP. Interacts with GPER1. As to expression, strongly expressed in lung, breast, immune system and fetal tissues.

Its subcellular location is the cell membrane. It is found in the membrane. Functionally, accessory protein that interacts with and modulates the function of G-protein coupled receptors including calcitonin gene-related peptide type 1 receptor (CALCRL), calcitonin receptor (CALCR) and G-protein coupled estrogen receptor 1 (GPER1). Required for the transport of CALCRL and GPER1 receptors to the plasma membrane. Plays a role in cardioprotection by reducing cardiac hypertrophy and perivascular fibrosis in a GPER1-dependent manner. Together with CALCRL, form a receptor complex for adrenomedullin/ADM and intermedin/ADM2. Together with CALCR, act as a receptor complex for amylin/IAPP. The chain is Receptor activity-modifying protein 3 from Homo sapiens (Human).